We begin with the raw amino-acid sequence, 969 residues long: RNA polymerase-associated protein RapA (969 aa).

The region spanning 162 to 339 (EVGQRVAPRV…FARLALLDAD (178 aa)) is the Helicase ATP-binding domain. ATP is bound at residue 175–182 (DEVGLGKT). The short motif at 285–288 (DEAH) is the DEAH box element. In terms of domain architecture, Helicase C-terminal spans 492–663 (RIEWLITFLK…IFLKNPQAVG (172 aa)).

Belongs to the SNF2/RAD54 helicase family. RapA subfamily. As to quaternary structure, interacts with the RNAP. Has a higher affinity for the core RNAP than for the holoenzyme. Its ATPase activity is stimulated by binding to RNAP.

Transcription regulator that activates transcription by stimulating RNA polymerase (RNAP) recycling in case of stress conditions such as supercoiled DNA or high salt concentrations. Probably acts by releasing the RNAP, when it is trapped or immobilized on tightly supercoiled DNA. Does not activate transcription on linear DNA. Probably not involved in DNA repair. The polypeptide is RNA polymerase-associated protein RapA (Actinobacillus pleuropneumoniae serotype 3 (strain JL03)).